Consider the following 219-residue polypeptide: 2-hydroxy-3-keto-5-methylthiopentenyl-1-phosphate phosphatase (219 aa).

Belongs to the HAD-like hydrolase superfamily. MtnX family.

It catalyses the reaction 2-hydroxy-5-methylsulfanyl-3-oxopent-1-enyl phosphate + H2O = 1,2-dihydroxy-5-(methylsulfanyl)pent-1-en-3-one + phosphate. It functions in the pathway amino-acid biosynthesis; L-methionine biosynthesis via salvage pathway; L-methionine from S-methyl-5-thio-alpha-D-ribose 1-phosphate: step 4/6. Dephosphorylates 2-hydroxy-3-keto-5-methylthiopentenyl-1-phosphate (HK-MTPenyl-1-P) yielding 1,2-dihydroxy-3-keto-5-methylthiopentene (DHK-MTPene). The chain is 2-hydroxy-3-keto-5-methylthiopentenyl-1-phosphate phosphatase from Bacillus cereus (strain 03BB102).